The sequence spans 32 residues: MSDIN-like toxin proprotein a (32 aa).

A propeptide spanning residues 1-10 (MSDINATRLP) is cleaved from the precursor. Positions 11 to 18 (IIGILLPP) form a cross-link, cyclopeptide (Ile-Pro). The propeptide occupies 19-32 (CIGDDVTLLLTRGE).

This sequence belongs to the MSDIN fungal toxin family. In terms of processing, processed by the macrocyclase-peptidase enzyme POPB to yield a toxic cyclic octapeptide. POPB first removes 10 residues from the N-terminus. Conformational trapping of the remaining peptide forces the enzyme to release this intermediate rather than proceed to macrocyclization. The enzyme rebinds the remaining peptide in a different conformation and catalyzes macrocyclization of the N-terminal 8 residues.

Its function is as follows. Probable toxin that belongs to the MSDIN-like toxin family responsible for a large number of food poisoning cases and deaths. The sequence is that of MSDIN-like toxin proprotein a from Amanita phalloides (Death cap).